The sequence spans 393 residues: Arginine biosynthesis bifunctional protein ArgJ (393 aa).

Residues Thr143, Lys168, Thr179, Glu265, Asn388, and Thr393 each coordinate substrate. The active-site Nucleophile is the Thr179.

It belongs to the ArgJ family. As to quaternary structure, heterotetramer of two alpha and two beta chains.

The protein resides in the cytoplasm. It catalyses the reaction N(2)-acetyl-L-ornithine + L-glutamate = N-acetyl-L-glutamate + L-ornithine. It carries out the reaction L-glutamate + acetyl-CoA = N-acetyl-L-glutamate + CoA + H(+). The protein operates within amino-acid biosynthesis; L-arginine biosynthesis; L-ornithine and N-acetyl-L-glutamate from L-glutamate and N(2)-acetyl-L-ornithine (cyclic): step 1/1. It functions in the pathway amino-acid biosynthesis; L-arginine biosynthesis; N(2)-acetyl-L-ornithine from L-glutamate: step 1/4. In terms of biological role, catalyzes two activities which are involved in the cyclic version of arginine biosynthesis: the synthesis of N-acetylglutamate from glutamate and acetyl-CoA as the acetyl donor, and of ornithine by transacetylation between N(2)-acetylornithine and glutamate. The protein is Arginine biosynthesis bifunctional protein ArgJ of Syntrophotalea carbinolica (strain DSM 2380 / NBRC 103641 / GraBd1) (Pelobacter carbinolicus).